Consider the following 380-residue polypeptide: DNA primase small subunit PriS (380 aa).

Residues D101, D103, and D282 contribute to the active site.

This sequence belongs to the eukaryotic-type primase small subunit family. As to quaternary structure, heterodimer of a small subunit (PriS) and a large subunit (PriL). The cofactor is Mg(2+). Mn(2+) is required as a cofactor.

Functionally, catalytic subunit of DNA primase, an RNA polymerase that catalyzes the synthesis of short RNA molecules used as primers for DNA polymerase during DNA replication. The small subunit contains the primase catalytic core and has DNA synthesis activity on its own. Binding to the large subunit stabilizes and modulates the activity, increasing the rate of DNA synthesis while decreasing the length of the DNA fragments, and conferring RNA synthesis capability. The DNA polymerase activity may enable DNA primase to also catalyze primer extension after primer synthesis. May also play a role in DNA repair. In Hyperthermus butylicus (strain DSM 5456 / JCM 9403 / PLM1-5), this protein is DNA primase small subunit PriS.